Reading from the N-terminus, the 124-residue chain is Fluoride-specific ion channel FluC 2 (124 aa).

4 consecutive transmembrane segments (helical) span residues Met-1–Thr-21, Ser-36–Gly-58, Val-63–Thr-85, and Leu-104–Phe-124. 2 residues coordinate Na(+): Gly-75 and Thr-78.

It belongs to the fluoride channel Fluc/FEX (TC 1.A.43) family. Heterodimer composed of FluC1 and FluC2. Neither FluC1 nor FluC2 alone catalyzes fluoride efflux from liposomes.

It is found in the cell membrane. It catalyses the reaction fluoride(in) = fluoride(out). With respect to regulation, na(+) is not transported, but it plays an essential structural role and its presence is essential for fluoride channel function. Fluoride-specific ion channel. Important for reducing fluoride concentration in the cell, thus reducing its toxicity. The sequence is that of Fluoride-specific ion channel FluC 2 from Lactobacillus acidophilus (strain ATCC 700396 / NCK56 / N2 / NCFM).